A 486-amino-acid chain; its full sequence is Glycogen synthase (486 aa).

An ADP-alpha-D-glucose-binding site is contributed by Lys-20.

Belongs to the glycosyltransferase 1 family. Bacterial/plant glycogen synthase subfamily.

It catalyses the reaction [(1-&gt;4)-alpha-D-glucosyl](n) + ADP-alpha-D-glucose = [(1-&gt;4)-alpha-D-glucosyl](n+1) + ADP + H(+). It functions in the pathway glycan biosynthesis; glycogen biosynthesis. Its function is as follows. Synthesizes alpha-1,4-glucan chains using ADP-glucose. The protein is Glycogen synthase of Aeromonas salmonicida (strain A449).